Here is a 918-residue protein sequence, read N- to C-terminus: Eukaryotic translation initiation factor 3 subunit C (918 aa).

The tract at residues 1–174 (MSRFFKGGSS…EEEGRRVVKS (174 aa)) is disordered. Ser10, Ser12, Ser16, Ser19, and Ser20 each carry phosphoserine. Composition is skewed to acidic residues over residues 36–47 (SSSEEESSEEES), 54–67 (ESSE…ESEV), and 79–128 (EDSE…ESDE). Thr667 is modified (phosphothreonine). The PCI domain maps to 681–856 (FHMHINLELL…GAIIFERVEI (176 aa)). Residues 879–918 (KLYEQKTQHTNPQENRRRDKGGSVKRRNERTENRNRSDMN) are disordered. The span at 907–918 (ERTENRNRSDMN) shows a compositional bias: basic and acidic residues.

Belongs to the eIF-3 subunit C family. In terms of assembly, component of the eukaryotic translation initiation factor 3 (eIF-3) complex. The eIF-3 complex appears to include tif32/eif3a, SPAC25G10.08/eif3b, tif33/eif3c, SPBC4C3.07/eif3f, tif35/eif3g and sum1/eif3i. This set of common subunits may also associate exclusively with either moe1/eif3d and int6/eif3e, or with SPAC821.05/eif3h and SPAC1751.03/eif3m. The eIF-3 complex may also include SPAC3A12.13c/eif3j.

It is found in the cytoplasm. In terms of biological role, component of the eukaryotic translation initiation factor 3 (eIF-3) complex, which is involved in protein synthesis of a specialized repertoire of mRNAs and, together with other initiation factors, stimulates binding of mRNA and methionyl-tRNAi to the 40S ribosome. The eIF-3 complex specifically targets and initiates translation of a subset of mRNAs involved in cell proliferation. The chain is Eukaryotic translation initiation factor 3 subunit C (nip1) from Schizosaccharomyces pombe (strain 972 / ATCC 24843) (Fission yeast).